Consider the following 176-residue polypeptide: NAD(P)H-quinone oxidoreductase subunit 6, chloroplastic (176 aa).

Transmembrane regions (helical) follow at residues 10–30 (FLLV…VLLT), 32–52 (PIYS…LYIL), 61–81 (AQLL…VMFM), 92–112 (LWTV…GLLI), and 152–172 (FFLP…GAIT).

The protein belongs to the complex I subunit 6 family. As to quaternary structure, NDH is composed of at least 16 different subunits, 5 of which are encoded in the nucleus.

Its subcellular location is the plastid. The protein resides in the chloroplast thylakoid membrane. The catalysed reaction is a plastoquinone + NADH + (n+1) H(+)(in) = a plastoquinol + NAD(+) + n H(+)(out). It carries out the reaction a plastoquinone + NADPH + (n+1) H(+)(in) = a plastoquinol + NADP(+) + n H(+)(out). NDH shuttles electrons from NAD(P)H:plastoquinone, via FMN and iron-sulfur (Fe-S) centers, to quinones in the photosynthetic chain and possibly in a chloroplast respiratory chain. The immediate electron acceptor for the enzyme in this species is believed to be plastoquinone. Couples the redox reaction to proton translocation, and thus conserves the redox energy in a proton gradient. The protein is NAD(P)H-quinone oxidoreductase subunit 6, chloroplastic (ndhG) of Morus indica (Mulberry).